The chain runs to 512 residues: ADP,ATP carrier protein 4 (512 aa).

12 helical membrane-spanning segments follow: residues 34-54 (ISKFLFITLLMFCILFIQNLI), 71-91 (ISFLKFWGVMPSAFLITVMYV), 102-122 (IFYLIISIFLIFFALFAYVIF), 157-177 (FSLFYIIAELWPNVVFALLFW), 192-212 (FYPLFGLLSQTGIYLAGHFLE), 231-251 (FHTLSIQIILTIVLILGIVSI), 296-316 (LIATLLICYGIAINLVEGPWK), 330-350 (AAFIGSYLSYTGVFTIFFVLL), 361-381 (FTSAVITPSIVFITGILFFAF), 390-410 (LIIANFILTDPALVAITIGAI), 448-468 (VIGTKLGKSGSAFLQSLIFII), and 476-496 (SISICLMIIFILTCLTWIWAT).

This sequence belongs to the ADP/ATP translocase tlc family.

Its subcellular location is the cell membrane. Functionally, provides the rickettsial cell with host ATP in exchange for rickettsial ADP. This is an obligate exchange system. This energy acquiring activity is an important component of rickettsial parasitism. The chain is ADP,ATP carrier protein 4 (tlcD) from Rickettsia typhi (strain ATCC VR-144 / Wilmington).